A 322-amino-acid chain; its full sequence is Probable uridine nucleosidase 2 (322 aa).

Residues aspartate 14 and histidine 246 contribute to the active site.

Belongs to the IUNH family. In terms of assembly, component of the NSH heterocomplex made of URH1/NSH1 and URH2/NSH2 which exhibits strong xanthosine nucleosidase activity. Interacts with URH1. Expressed in roots, seedlings and flowers.

It is found in the cytoplasm. Its subcellular location is the cytosol. It carries out the reaction uridine + H2O = D-ribose + uracil. It catalyses the reaction inosine + H2O = hypoxanthine + D-ribose. The enzyme catalyses xanthosine + H2O = D-ribose + xanthine. Its function is as follows. Involved in pyrimidine breakdown, especially in response to dark stress. In the presence of URH1, exhibits efficient inosine and xanthosine hydrolytic activities. Support inosine breakdown especially during the late phase of senescence. This Arabidopsis thaliana (Mouse-ear cress) protein is Probable uridine nucleosidase 2.